A 746-amino-acid chain; its full sequence is Dystrobrevin alpha (746 aa).

Residues 1–288 are interaction with MAGEE1; sequence MIEDSGKRGN…SHSNQHQMKE (288 aa). The segment at 238–294 adopts a ZZ-type zinc-finger fold; that stretch reads FHPVECSYCHSESMMGFRYRCQQCHNYQLCQDCFWRGHAGGSHSNQHQMKEYTSWKS. Residues Cys-243, Cys-246, Cys-258, Cys-261, Cys-267, Cys-270, His-280, and His-284 each contribute to the Zn(2+) site. Residues 397–447 are syntrophin-binding region; it reads DRLADEHVLIGLYVNMLRNDPPCMLESSNRLDEEHRLIARYAARLAAESSS. A coiled-coil region spans residues 458 to 557; it reads DISFTIDANK…KLLKEEELKQ (100 aa). 3 disordered regions span residues 555–577, 646–667, and 684–721; these read LKQG…SRPI, ETES…APSP, and YIHG…VRQL. Residues 563–576 are compositionally biased toward low complexity; the sequence is SSPRSSPSHTISRP. The residue at position 666 (Ser-666) is a Phosphoserine.

This sequence belongs to the dystrophin family. Dystrobrevin subfamily. As to quaternary structure, interacts with dystrophin, utrophin and the syntrophins SNTA1, SNTB1, SNTB2, SNTG1 and SNTG2. Binds dystrobrevin binding protein 1. Interacts with MAGEE1. Interacts with Ctnnal1. The interaction is required for correct localization of both Ctnnal1 and Dtna. Does not interact with utrophin. In terms of assembly, does not interact with syntrophin. Phosphorylation of isoform 2 on tyrosine kinase substrate domain present in the C-terminus. Expressed in skeletal muscle, heart, lung and brain. Sarcolemma and neuromuscular junction in skeletal muscle. Isoform 2 is restricted to the neuromuscular junction. Isoforms 5 and 6 are only expressed in muscle.

It is found in the cytoplasm. It localises to the synapse. The protein resides in the cell membrane. In terms of biological role, involved in synapse maturation and required for normal muscle function. The chain is Dystrobrevin alpha (Dtna) from Mus musculus (Mouse).